A 510-amino-acid polypeptide reads, in one-letter code: Inositol-3-phosphate synthase (510 aa).

NAD(+) is bound by residues Gly70, Gly71, Asn72, Asn73, Asp143, Ile180, Gln190, Arg193, Thr230, Ala231, Asn232, Thr233, Gly281, Ser282, Asp306, Ser309, Asn340, Asn341, Asp342, Lys355, Gly393, Asp394, Asp422, and Ser423.

The protein belongs to the myo-inositol 1-phosphate synthase family. NAD(+) is required as a cofactor.

The protein localises to the cytoplasm. The protein resides in the cytosol. Its subcellular location is the nucleus. It catalyses the reaction D-glucose 6-phosphate = 1D-myo-inositol 3-phosphate. The protein operates within polyol metabolism; myo-inositol biosynthesis; myo-inositol from D-glucose 6-phosphate: step 1/2. Its function is as follows. Key enzyme in myo-inositol biosynthesis pathway that catalyzes the conversion of glucose 6-phosphate to 1-myo-inositol 1-phosphate in a NAD-dependent manner. This is Inositol-3-phosphate synthase from Zea mays (Maize).